A 228-amino-acid chain; its full sequence is Calcyclin-binding protein (228 aa).

Residue Met-1 is modified to N-acetylmethionine. Ala-2 is subject to N-acetylalanine. Residues 2 to 80 (ASEELQKDLE…YTVKISNYGW (79 aa)) are interaction with SIAH1. A Phosphoserine modification is found at Ser-3. N6-acetyllysine occurs at positions 8 and 19. Residue Ser-34 is modified to Phosphoserine. The region spanning 73-167 (VKISNYGWDQ…VENTRWDYLT (95 aa)) is the CS domain. An interaction with SKP1 region spans residues 73–228 (VKISNYGWDQ…EKQAKGDTEF (156 aa)). An N6-acetyllysine mark is found at Lys-85 and Lys-118. An interaction with S100A6 region spans residues 154–228 (CRKKVENTRW…EKQAKGDTEF (75 aa)). Positions 168–228 (QVEKECKEKE…EKQAKGDTEF (61 aa)) constitute an SGS domain.

In terms of assembly, homodimer. Interacts with proteins of the S100 family S100A1, S100A6, S100B, S100P and S100A12 in a calcium-dependent manner. Component of some large E3 complex at least composed of UBE2D1, SIAH1, CACYBP/SIP, SKP1, APC and TBL1X. Interacts directly with SIAH1, SIAH2 and SKP1. In terms of processing, phosphorylated on serine residues. Phosphorylated upon induction by RA or at high calcium concentrations.

It localises to the nucleus. It is found in the cytoplasm. Functionally, may be involved in calcium-dependent ubiquitination and subsequent proteasomal degradation of target proteins. Probably serves as a molecular bridge in ubiquitin E3 complexes. Participates in the ubiquitin-mediated degradation of beta-catenin (CTNNB1). The chain is Calcyclin-binding protein (CACYBP) from Homo sapiens (Human).